The primary structure comprises 337 residues: Anthranilate phosphoribosyltransferase (337 aa).

Residues G81, 84-85 (GD), S89, 91-94 (NVST), 109-117 (KHGNRAATS), and A121 contribute to the 5-phospho-alpha-D-ribose 1-diphosphate site. G81 lines the anthranilate pocket. Residue S93 participates in Mg(2+) binding. Residue N112 coordinates anthranilate. R167 contacts anthranilate. Residues D226 and E227 each coordinate Mg(2+).

It belongs to the anthranilate phosphoribosyltransferase family. In terms of assembly, homodimer. Mg(2+) serves as cofactor.

The catalysed reaction is N-(5-phospho-beta-D-ribosyl)anthranilate + diphosphate = 5-phospho-alpha-D-ribose 1-diphosphate + anthranilate. The protein operates within amino-acid biosynthesis; L-tryptophan biosynthesis; L-tryptophan from chorismate: step 2/5. In terms of biological role, catalyzes the transfer of the phosphoribosyl group of 5-phosphorylribose-1-pyrophosphate (PRPP) to anthranilate to yield N-(5'-phosphoribosyl)-anthranilate (PRA). This is Anthranilate phosphoribosyltransferase from Methylorubrum populi (strain ATCC BAA-705 / NCIMB 13946 / BJ001) (Methylobacterium populi).